We begin with the raw amino-acid sequence, 119 residues long: MARVKYGKVTRARRKRWIKLAKGYFGTKKSSYKKAHEQVIRSMAYAFIGRKERKRDFRSLWIVRINAAVRPEGLSYSTFMHGLKLANININRKMLSELAINNSEEFKQIVQQAKKALNK.

The protein belongs to the bacterial ribosomal protein bL20 family.

Its function is as follows. Binds directly to 23S ribosomal RNA and is necessary for the in vitro assembly process of the 50S ribosomal subunit. It is not involved in the protein synthesizing functions of that subunit. The sequence is that of Large ribosomal subunit protein bL20 from Mycoplasma capricolum subsp. capricolum (strain California kid / ATCC 27343 / NCTC 10154).